The following is a 518-amino-acid chain: Vesicular inhibitory amino acid transporter (518 aa).

Topologically, residues 1-125 are cytoplasmic; that stretch reads MATLIRSKLS…WNVTNAIQGM (125 aa). Positions 66–98 are disordered; the sequence is EVPSGDPTAEGDSHYQRDGTGPPSSASKDEGLC. A helical membrane pass occupies residues 126 to 146; it reads FVLGLPYAILHGGYLGLFLII. Topologically, residues 147–197 are lumenal, vesicle; the sequence is FAAVVCCYTGKILIACLYEENEDGETVRVRDSYVDIANACCAPRFPKLGGR. The helical transmembrane segment at 198-218 threads the bilayer; it reads VVNVAQIIELVMTCILYVVVS. Over 219 to 258 the chain is Cytoplasmic; that stretch reads GNLMYNSFPSLPISQKSWSIIATAMLLPCAFLKNLKAVSK. The chain crosses the membrane as a helical span at residues 259 to 279; that stretch reads FSLLCTLAHFVINVLVIAYCL. The Lumenal, vesicle segment spans residues 280 to 298; it reads SRARDWAWDKVKFYIDVKK. The helical transmembrane segment at 299–319 threads the bilayer; the sequence is FPISIGIIVFSYTSQIFLPSL. Residues 320–334 lie on the Cytoplasmic side of the membrane; the sequence is EGNMQSPKEFHCMMN. A helical membrane pass occupies residues 335 to 355; the sequence is WTHIAACILKGLFALVAYLTW. The Lumenal, vesicle portion of the chain corresponds to 356 to 376; sequence ADETKEVITDNLPSTIRAVVN. A helical transmembrane segment spans residues 377–397; sequence LFLVAKALLSYPLPFFAAVEV. Topologically, residues 398-431 are cytoplasmic; the sequence is LEKSLFQEGARAFFPNCYGGDGRLKSWGLTLRCA. The helical transmembrane segment at 432–452 threads the bilayer; sequence LVVFTLLMAIYVPHFALLMGL. At 453–454 the chain is on the lumenal, vesicle side; the sequence is TG. Residues 455–475 form a helical membrane-spanning segment; sequence SLTGAGLCFLLPSLFHLKLLW. Residues 476–482 are Cytoplasmic-facing; it reads RKLQWHQ. The helical transmembrane segment at 483 to 503 threads the bilayer; sequence VFFDVSIFVIGSICSVSGFVH. The Lumenal, vesicle segment spans residues 504 to 518; that stretch reads SLEGLIEAFRFNIED.

This sequence belongs to the amino acid/polyamine transporter 2 family.

It localises to the cytoplasmic vesicle membrane. The protein localises to the presynapse. It carries out the reaction 4-aminobutanoate(out) + n H(+)(in) = 4-aminobutanoate(in) + n H(+)(out). The enzyme catalyses glycine(out) + n H(+)(in) = glycine(in) + n H(+)(out). It catalyses the reaction beta-alanine(out) + n H(+)(in) = beta-alanine(in) + n H(+)(out). Antiporter that exchanges vesicular protons for cytosolic 4-aminobutanoate or to a lesser extend glycine, thus allowing their secretion from nerve terminals. The transport is equally dependent on the chemical and electrical components of the proton gradient. May also transport beta-alanine. Acidification of GABAergic synaptic vesicles is a prerequisite for 4-aminobutanoate uptake. The protein is Vesicular inhibitory amino acid transporter of Xenopus tropicalis (Western clawed frog).